Consider the following 220-residue polypeptide: Uracil-DNA glycosylase (220 aa).

Asp65 (proton acceptor) is an active-site residue.

Belongs to the uracil-DNA glycosylase (UDG) superfamily. UNG family.

The protein resides in the cytoplasm. The enzyme catalyses Hydrolyzes single-stranded DNA or mismatched double-stranded DNA and polynucleotides, releasing free uracil.. Functionally, excises uracil residues from the DNA which can arise as a result of misincorporation of dUMP residues by DNA polymerase or due to deamination of cytosine. In Leuconostoc mesenteroides subsp. mesenteroides (strain ATCC 8293 / DSM 20343 / BCRC 11652 / CCM 1803 / JCM 6124 / NCDO 523 / NBRC 100496 / NCIMB 8023 / NCTC 12954 / NRRL B-1118 / 37Y), this protein is Uracil-DNA glycosylase.